Reading from the N-terminus, the 424-residue chain is Enolase (424 aa).

(2R)-2-phosphoglycerate is bound at residue Gln-162. The active-site Proton donor is Glu-204. Residues Asp-241, Glu-284, and Asp-311 each contribute to the Mg(2+) site. The (2R)-2-phosphoglycerate site is built by Lys-336, Arg-365, Ser-366, and Lys-387. The active-site Proton acceptor is Lys-336.

Belongs to the enolase family. Requires Mg(2+) as cofactor.

It localises to the cytoplasm. It is found in the secreted. Its subcellular location is the cell surface. The catalysed reaction is (2R)-2-phosphoglycerate = phosphoenolpyruvate + H2O. It participates in carbohydrate degradation; glycolysis; pyruvate from D-glyceraldehyde 3-phosphate: step 4/5. Its function is as follows. Catalyzes the reversible conversion of 2-phosphoglycerate (2-PG) into phosphoenolpyruvate (PEP). It is essential for the degradation of carbohydrates via glycolysis. This is Enolase from Chelativorans sp. (strain BNC1).